Consider the following 774-residue polypeptide: C6 finger domain transcription factor nscR (774 aa).

Residues 17-43 constitute a DNA-binding region (zn(2)-C6 fungal-type); that stretch reads CELCRERKIKCDKVDPCNNCVSAGVVC. Disordered regions lie at residues 61–94, 536–559, and 665–697; these read RPMS…SGAV, LQLP…PQEH, and PTFS…SDLS. A compositionally biased stretch (pro residues) spans 67–78; sequence FVPPRAPTPVAG. Residues 536-548 are compositionally biased toward low complexity; the sequence is LQLPQPSNGSSQP. Over residues 665–674 the composition is skewed to polar residues; that stretch reads PTFSLGSSTG. The segment covering 675 to 697 has biased composition (low complexity); it reads TSAAPTPRSRASSTPSDTLSDLS.

The protein resides in the nucleus. Its function is as follows. Transcription factor that specifically regulates the neosartoricin biosynthesis gene cluster. This Aspergillus fumigatus (strain ATCC MYA-4609 / CBS 101355 / FGSC A1100 / Af293) (Neosartorya fumigata) protein is C6 finger domain transcription factor nscR.